Consider the following 448-residue polypeptide: N-succinylarginine dihydrolase (448 aa).

Substrate contacts are provided by residues 19–28, N110, and 137–138; these read GGLSYGNVAS and HR. The active site involves E174. R214 provides a ligand contact to substrate. H250 is a catalytic residue. The substrate site is built by D252 and N365. Catalysis depends on C371, which acts as the Nucleophile.

Belongs to the succinylarginine dihydrolase family. Homodimer.

It catalyses the reaction N(2)-succinyl-L-arginine + 2 H2O + 2 H(+) = N(2)-succinyl-L-ornithine + 2 NH4(+) + CO2. It functions in the pathway amino-acid degradation; L-arginine degradation via AST pathway; L-glutamate and succinate from L-arginine: step 2/5. Functionally, catalyzes the hydrolysis of N(2)-succinylarginine into N(2)-succinylornithine, ammonia and CO(2). The protein is N-succinylarginine dihydrolase of Pseudomonas syringae pv. tomato (strain ATCC BAA-871 / DC3000).